The primary structure comprises 83 residues: MSSGGLLLLLGLLTLWEVLTPVSSKDRPKFCELPADPGPCNGLFQAFYYNPVQRKCLKFRYGGCKANPNTFKTIEECKRICAA.

The N-terminal stretch at 1 to 24 is a signal peptide; that stretch reads MSSGGLLLLLGLLTLWEVLTPVSS. Residues 31 to 81 enclose the BPTI/Kunitz inhibitor domain; sequence CELPADPGPCNGLFQAFYYNPVQRKCLKFRYGGCKANPNTFKTIEECKRIC. Intrachain disulfides connect C31/C81, C40/C64, and C56/C77.

This sequence belongs to the venom Kunitz-type family. In terms of tissue distribution, expressed by the venom gland.

Its subcellular location is the secreted. Serine protease inhibitor. In Pseudechis porphyriacus (Red-bellied black snake), this protein is Kunitz-type serine protease inhibitor blackelin-3.